The primary structure comprises 119 residues: Protein TusC (119 aa).

Belongs to the DsrF/TusC family. As to quaternary structure, heterohexamer, formed by a dimer of trimers. The hexameric TusBCD complex contains 2 copies each of TusB, TusC and TusD. The TusBCD complex interacts with TusE.

It localises to the cytoplasm. Part of a sulfur-relay system required for 2-thiolation of 5-methylaminomethyl-2-thiouridine (mnm(5)s(2)U) at tRNA wobble positions. This is Protein TusC from Klebsiella pneumoniae subsp. pneumoniae (strain ATCC 700721 / MGH 78578).